The primary structure comprises 266 residues: Protein-ADP-ribose hydrolase (266 aa).

The Macro domain occupies 74–265 (TDLKDLKPIK…LYKEAFNRDA (192 aa)). ADP-D-ribose-binding residues include Asp93, Ile94, and Asn107. Residues Cys113, His118, and Cys120 each contribute to the Zn(2+) site. ADP-D-ribose-binding residues include Cys120, Ile121, Asp122, Ser212, Thr213, Gly214, and Phe216.

It belongs to the MacroD-type family. Zn-Macro subfamily. Requires Zn(2+) as cofactor.

It catalyses the reaction 4-O-(ADP-D-ribosyl)-L-aspartyl-[protein] + H2O = L-aspartyl-[protein] + ADP-D-ribose + H(+). In terms of biological role, ADP-ribosylhydrolase that specifically reverses the SirTM-mediated mono-ADP-ribosylation at an asparatate residue of GcvH-L, by releasing ADP-ribose from the target protein. May play a role in the regulation of the response to host-induced oxidative stress. This is Protein-ADP-ribose hydrolase from Staphylococcus aureus (strain MRSA252).